The following is a 902-amino-acid chain: DNA mismatch repair protein MutS (902 aa).

647 to 654 (GPNMGGKS) lines the ATP pocket.

It belongs to the DNA mismatch repair MutS family.

In terms of biological role, this protein is involved in the repair of mismatches in DNA. It is possible that it carries out the mismatch recognition step. This protein has a weak ATPase activity. This chain is DNA mismatch repair protein MutS, found in Nitrosospira multiformis (strain ATCC 25196 / NCIMB 11849 / C 71).